We begin with the raw amino-acid sequence, 183 residues long: Ribose 1,5-bisphosphate phosphokinase PhnN (183 aa).

This sequence belongs to the ribose 1,5-bisphosphokinase family.

The enzyme catalyses alpha-D-ribose 1,5-bisphosphate + ATP = 5-phospho-alpha-D-ribose 1-diphosphate + ADP. It participates in metabolic intermediate biosynthesis; 5-phospho-alpha-D-ribose 1-diphosphate biosynthesis; 5-phospho-alpha-D-ribose 1-diphosphate from D-ribose 5-phosphate (route II): step 3/3. Functionally, catalyzes the phosphorylation of ribose 1,5-bisphosphate to 5-phospho-D-ribosyl alpha-1-diphosphate (PRPP). The sequence is that of Ribose 1,5-bisphosphate phosphokinase PhnN from Azotobacter vinelandii (strain DJ / ATCC BAA-1303).